The sequence spans 255 residues: DNA polymerase epsilon subunit C (255 aa).

The disordered stretch occupies residues 109–255 (KTSSGLHKLS…DEDEASADDG (147 aa)). Acidic residues predominate over residues 135-156 (MEEDIPEEDLQEDDEMDVDETE). Positions 171 to 184 (KASASAKSILSAFK) are enriched in low complexity. 2 stretches are compositionally biased toward acidic residues: residues 199–219 (TEED…EIDP) and 236–255 (DLDE…ADDG).

Heterotetramer. Consists of four subunits: POL2, DPB2, DPB3 and DPB4.

The protein localises to the nucleus. Its function is as follows. As accessory component of the DNA polymerase epsilon (DNA polymerase II) participates in chromosomal DNA replication. The sequence is that of DNA polymerase epsilon subunit C (DPB3) from Candida glabrata (strain ATCC 2001 / BCRC 20586 / JCM 3761 / NBRC 0622 / NRRL Y-65 / CBS 138) (Yeast).